The following is a 479-amino-acid chain: Ribulose bisphosphate carboxylase large chain (479 aa).

A propeptide spanning residues 1–2 (MS) is cleaved from the precursor. The substrate site is built by asparagine 123 and threonine 173. The Proton acceptor role is filled by lysine 175. Lysine 177 contributes to the substrate binding site. Positions 201, 203, and 204 each coordinate Mg(2+). Lysine 201 carries the post-translational modification N6-carboxylysine. A Phosphoserine modification is found at serine 208. Histidine 294 (proton acceptor) is an active-site residue. Substrate is bound by residues arginine 295 and histidine 327. Threonine 330 carries the phosphothreonine modification. Serine 379 contacts substrate.

It belongs to the RuBisCO large chain family. Type I subfamily. As to quaternary structure, heterohexadecamer of 8 large chains and 8 small chains; disulfide-linked. The disulfide link is formed within the large subunit homodimers. It depends on Mg(2+) as a cofactor. Post-translationally, the disulfide bond which can form in the large chain dimeric partners within the hexadecamer appears to be associated with oxidative stress and protein turnover.

Its subcellular location is the plastid. It is found in the chloroplast. It carries out the reaction 2 (2R)-3-phosphoglycerate + 2 H(+) = D-ribulose 1,5-bisphosphate + CO2 + H2O. The enzyme catalyses D-ribulose 1,5-bisphosphate + O2 = 2-phosphoglycolate + (2R)-3-phosphoglycerate + 2 H(+). In terms of biological role, ruBisCO catalyzes two reactions: the carboxylation of D-ribulose 1,5-bisphosphate, the primary event in carbon dioxide fixation, as well as the oxidative fragmentation of the pentose substrate in the photorespiration process. Both reactions occur simultaneously and in competition at the same active site. This is Ribulose bisphosphate carboxylase large chain from Crucihimalaya wallichii (Rock-cress).